Reading from the N-terminus, the 233-residue chain is Choline-phosphate cytidylyltransferase (233 aa).

6 residues coordinate CDP-choline: Leu6, Ala8, Gly9, Tyr80, Ser85, and Ala101. Asp102 provides a ligand contact to Mg(2+). Position 187 (Tyr187) interacts with CDP-choline. The Mg(2+) site is built by Glu213 and Asp215.

It belongs to the LicC/PntC cytidylyltransferase family. Mg(2+) is required as a cofactor.

It catalyses the reaction phosphocholine + CTP + H(+) = CDP-choline + diphosphate. It participates in lipopolysaccharide biosynthesis. Cytidylyltransferase involved in the biosynthesis of lipopolysaccharides (LPS), a necessary component and antigenic determinant of the outer membrane that has been shown to be an important factor in the host-parasite interaction in a number of Gram-negative species. Catalyzes the activation of phosphocholine (P-Cho) to CDP-choline (CDP-Cho). LicC is critical for the expression of the 6A2-specific epitope. The chain is Choline-phosphate cytidylyltransferase from Haemophilus influenzae (strain ATCC 51907 / DSM 11121 / KW20 / Rd).